The primary structure comprises 158 residues: MRKRQAKKRPLLPDPKFNDQLVTRFVNMMMWDGKKSVAFKIFYDAIAIVDEKKQDEEKTGLEIWKDALSNVMPHVEVRSRRVGGATFQIPMQIRPDRKVSTAMKWLISFSRKRNEKSMAGKLAAEVLAAAKEEGAAVKKRVDTHKMAEANKAFSHFRF.

Belongs to the universal ribosomal protein uS7 family. Part of the 30S ribosomal subunit. Contacts proteins S9 and S11.

One of the primary rRNA binding proteins, it binds directly to 16S rRNA where it nucleates assembly of the head domain of the 30S subunit. Is located at the subunit interface close to the decoding center, probably blocks exit of the E-site tRNA. The sequence is that of Small ribosomal subunit protein uS7 from Christiangramia forsetii (strain DSM 17595 / CGMCC 1.15422 / KT0803) (Gramella forsetii).